The chain runs to 98 residues: UPF0358 protein LCA_1078 (98 aa).

This sequence belongs to the UPF0358 family.

The chain is UPF0358 protein LCA_1078 from Latilactobacillus sakei subsp. sakei (strain 23K) (Lactobacillus sakei subsp. sakei).